The sequence spans 167 residues: Bacterial non-heme ferritin-like protein (167 aa).

The Ferritin-like diiron domain maps to 1–145; sequence MATAGMLLKL…TILDEVRSAK (145 aa).

This sequence belongs to the ferritin family. Prokaryotic subfamily.

Its subcellular location is the cytoplasm. This Escherichia coli O157:H7 protein is Bacterial non-heme ferritin-like protein (ftnB).